The sequence spans 226 residues: Cytidylate kinase (226 aa).

11–19 contributes to the ATP binding site; the sequence is GPAAAGKST.

The protein belongs to the cytidylate kinase family. Type 1 subfamily.

The protein localises to the cytoplasm. It carries out the reaction CMP + ATP = CDP + ADP. The enzyme catalyses dCMP + ATP = dCDP + ADP. The polypeptide is Cytidylate kinase (Bacillus licheniformis (strain ATCC 14580 / DSM 13 / JCM 2505 / CCUG 7422 / NBRC 12200 / NCIMB 9375 / NCTC 10341 / NRRL NRS-1264 / Gibson 46)).